We begin with the raw amino-acid sequence, 341 residues long: Tetraacyldisaccharide 4'-kinase (341 aa).

54–61 is a binding site for ATP; that stretch reads TVGGAGKT.

Belongs to the LpxK family.

It carries out the reaction a lipid A disaccharide + ATP = a lipid IVA + ADP + H(+). It functions in the pathway glycolipid biosynthesis; lipid IV(A) biosynthesis; lipid IV(A) from (3R)-3-hydroxytetradecanoyl-[acyl-carrier-protein] and UDP-N-acetyl-alpha-D-glucosamine: step 6/6. In terms of biological role, transfers the gamma-phosphate of ATP to the 4'-position of a tetraacyldisaccharide 1-phosphate intermediate (termed DS-1-P) to form tetraacyldisaccharide 1,4'-bis-phosphate (lipid IVA). This chain is Tetraacyldisaccharide 4'-kinase, found in Brucella ovis (strain ATCC 25840 / 63/290 / NCTC 10512).